Here is a 371-residue protein sequence, read N- to C-terminus: MLKFTLHKKDGLARRGTLELNHGKIETPVFMPVGTYGSVKAMNPQNLHDIKAQIILGNTYHLWLRPGLEVIGQFGGLHGFIGWDKPILTDSGGFQVFSLSDMRKLTEEGCTFKSPINGDKLFLSPEISMKIQTVLNSDIAMQLDECTPGEATREQARKSLQMSLRWAERSKKAFEDLKNPNALFGIVQGAMYEDLREESLRGLEQFDFPGLAVGGLSVGEPKPEMYRMLRAVGPILPEHKPHYLMGVGTPEDLVYGVAHGIDMFDCVMPTRNARNGWLFTRFGDLKIKNAKHKLDKRPIDESCTCYACQNFSRAYLHHLHRTGEILGAQLNTIHNLHFYQVIMAEMREAVEQGKFADWQARFHENRARGTD.

The Proton acceptor role is filled by aspartate 90. Residues aspartate 90–phenylalanine 94, aspartate 144, glutamine 188, and glycine 215 each bind substrate. The tract at residues glycine 246 to aspartate 252 is RNA binding. The active-site Nucleophile is aspartate 265. Residues threonine 270–arginine 274 are RNA binding; important for wobble base 34 recognition. 4 residues coordinate Zn(2+): cysteine 303, cysteine 305, cysteine 308, and histidine 334.

It belongs to the queuine tRNA-ribosyltransferase family. Homodimer. Within each dimer, one monomer is responsible for RNA recognition and catalysis, while the other monomer binds to the replacement base PreQ1. The cofactor is Zn(2+).

It catalyses the reaction 7-aminomethyl-7-carbaguanine + guanosine(34) in tRNA = 7-aminomethyl-7-carbaguanosine(34) in tRNA + guanine. Its pathway is tRNA modification; tRNA-queuosine biosynthesis. Its function is as follows. Catalyzes the base-exchange of a guanine (G) residue with the queuine precursor 7-aminomethyl-7-deazaguanine (PreQ1) at position 34 (anticodon wobble position) in tRNAs with GU(N) anticodons (tRNA-Asp, -Asn, -His and -Tyr). Catalysis occurs through a double-displacement mechanism. The nucleophile active site attacks the C1' of nucleotide 34 to detach the guanine base from the RNA, forming a covalent enzyme-RNA intermediate. The proton acceptor active site deprotonates the incoming PreQ1, allowing a nucleophilic attack on the C1' of the ribose to form the product. After dissociation, two additional enzymatic reactions on the tRNA convert PreQ1 to queuine (Q), resulting in the hypermodified nucleoside queuosine (7-(((4,5-cis-dihydroxy-2-cyclopenten-1-yl)amino)methyl)-7-deazaguanosine). The chain is Queuine tRNA-ribosyltransferase from Neisseria meningitidis serogroup B (strain ATCC BAA-335 / MC58).